The primary structure comprises 495 residues: Probable histidine ammonia-lyase (495 aa).

Positions 141–143 (ASG) form a cross-link, 5-imidazolinone (Ala-Gly). 2,3-didehydroalanine (Ser) is present on S142.

This sequence belongs to the PAL/histidase family. Contains an active site 4-methylidene-imidazol-5-one (MIO), which is formed autocatalytically by cyclization and dehydration of residues Ala-Ser-Gly.

It localises to the cytoplasm. The enzyme catalyses L-histidine = trans-urocanate + NH4(+). It functions in the pathway amino-acid degradation; L-histidine degradation into L-glutamate; N-formimidoyl-L-glutamate from L-histidine: step 1/3. This is Probable histidine ammonia-lyase from Thermoplasma volcanium (strain ATCC 51530 / DSM 4299 / JCM 9571 / NBRC 15438 / GSS1).